Reading from the N-terminus, the 353-residue chain is Mitochondrial distribution and morphology protein 10 (353 aa).

This sequence belongs to the MDM10 family. In terms of assembly, component of the ER-mitochondria encounter structure (ERMES) or MDM complex, composed of MMM1, MDM10, MDM12 and MDM34. Associates with the mitochondrial outer membrane sorting assembly machinery SAM(core) complex.

It localises to the mitochondrion outer membrane. Component of the ERMES/MDM complex, which serves as a molecular tether to connect the endoplasmic reticulum and mitochondria. Components of this complex are involved in the control of mitochondrial shape and protein biogenesis and may function in phospholipid exchange. MDM10 is involved in the late assembly steps of the general translocase of the mitochondrial outer membrane (TOM complex). Functions in the TOM40-specific route of the assembly of outer membrane beta-barrel proteins, including the association of TOM40 with the receptor TOM22 and small TOM proteins. Can associate with the SAM(core) complex as well as the MDM12-MMM1 complex, both involved in late steps of the major beta-barrel assembly pathway, that is responsible for biogenesis of all outer membrane beta-barrel proteins. May act as a switch that shuttles between both complexes and channels precursor proteins into the TOM40-specific pathway. Plays a role in mitochondrial morphology and in the inheritance of mitochondria. The protein is Mitochondrial distribution and morphology protein 10 of Yarrowia lipolytica (strain CLIB 122 / E 150) (Yeast).